A 628-amino-acid polypeptide reads, in one-letter code: 1-deoxy-D-xylulose-5-phosphate synthase (628 aa).

Residues histidine 77 and 118–120 (GHS) contribute to the thiamine diphosphate site. Aspartate 150 provides a ligand contact to Mg(2+). Thiamine diphosphate-binding positions include 151–152 (GA), asparagine 180, tyrosine 288, and glutamate 369. A Mg(2+)-binding site is contributed by asparagine 180.

The protein belongs to the transketolase family. DXPS subfamily. Homodimer. Requires Mg(2+) as cofactor. The cofactor is thiamine diphosphate.

The catalysed reaction is D-glyceraldehyde 3-phosphate + pyruvate + H(+) = 1-deoxy-D-xylulose 5-phosphate + CO2. It participates in metabolic intermediate biosynthesis; 1-deoxy-D-xylulose 5-phosphate biosynthesis; 1-deoxy-D-xylulose 5-phosphate from D-glyceraldehyde 3-phosphate and pyruvate: step 1/1. In terms of biological role, catalyzes the acyloin condensation reaction between C atoms 2 and 3 of pyruvate and glyceraldehyde 3-phosphate to yield 1-deoxy-D-xylulose-5-phosphate (DXP). This chain is 1-deoxy-D-xylulose-5-phosphate synthase, found in Aquifex aeolicus (strain VF5).